Here is a 143-residue protein sequence, read N- to C-terminus: Crossover junction endodeoxyribonuclease Hjc (143 aa).

Residue Glu-11 participates in Mg(2+) binding. Residue Ser-31 is part of the active site. The Mg(2+) site is built by Asp-41 and Glu-54.

This sequence belongs to the Holliday junction resolvase Hjc family. As to quaternary structure, homodimer. It depends on Mg(2+) as a cofactor.

It catalyses the reaction Endonucleolytic cleavage at a junction such as a reciprocal single-stranded crossover between two homologous DNA duplexes (Holliday junction).. Functionally, a structure-specific endonuclease that resolves Holliday junction (HJ) intermediates during genetic recombination. Cleaves 4-way DNA junctions introducing paired nicks in opposing strands, leaving a 5'-terminal phosphate and a 3'-terminal hydroxyl group that are ligated to produce recombinant products. In terms of biological role, redundant function with Holliday junction resolvase Hje. In Sulfolobus acidocaldarius (strain ATCC 33909 / DSM 639 / JCM 8929 / NBRC 15157 / NCIMB 11770), this protein is Crossover junction endodeoxyribonuclease Hjc.